We begin with the raw amino-acid sequence, 35 residues long: Riboflavin-binding protein (35 aa).

Residues cysteine 5 and cysteine 32 are joined by a disulfide bond.

The protein belongs to the folate receptor family.

Its function is as follows. Required for the transport of riboflavin to the developing oocyte. This chain is Riboflavin-binding protein, found in Struthio camelus (Common ostrich).